Here is a 247-residue protein sequence, read N- to C-terminus: ATP synthase subunit a, chloroplastic (247 aa).

The next 5 helical transmembrane spans lie at 38–58 (QVLI…TIAV), 95–115 (VPFI…GALL), 134–154 (INTT…AGFT), 199–219 (LVVV…VMFL), and 220–240 (GLFT…AYIG).

This sequence belongs to the ATPase A chain family. In terms of assembly, F-type ATPases have 2 components, CF(1) - the catalytic core - and CF(0) - the membrane proton channel. CF(1) has five subunits: alpha(3), beta(3), gamma(1), delta(1), epsilon(1). CF(0) has four main subunits: a, b, b' and c.

It is found in the plastid. The protein resides in the chloroplast thylakoid membrane. Key component of the proton channel; it plays a direct role in the translocation of protons across the membrane. This Liriodendron tulipifera (Tuliptree) protein is ATP synthase subunit a, chloroplastic.